A 265-amino-acid chain; its full sequence is Shikimate dehydrogenase (NADP(+)) (265 aa).

Residues 15 to 17 (SKS) and threonine 62 contribute to the shikimate site. Catalysis depends on lysine 66, which acts as the Proton acceptor. Shikimate contacts are provided by asparagine 87 and aspartate 102. Residues 127–131 (GAGGA), 151–156 (NRTVSR), and methionine 212 each bind NADP(+). Tyrosine 214 contributes to the shikimate binding site. Glycine 234 provides a ligand contact to NADP(+).

It belongs to the shikimate dehydrogenase family. Homodimer.

It carries out the reaction shikimate + NADP(+) = 3-dehydroshikimate + NADPH + H(+). Its pathway is metabolic intermediate biosynthesis; chorismate biosynthesis; chorismate from D-erythrose 4-phosphate and phosphoenolpyruvate: step 4/7. Functionally, involved in the biosynthesis of the chorismate, which leads to the biosynthesis of aromatic amino acids. Catalyzes the reversible NADPH linked reduction of 3-dehydroshikimate (DHSA) to yield shikimate (SA). This Thiobacillus denitrificans (strain ATCC 25259 / T1) protein is Shikimate dehydrogenase (NADP(+)).